The chain runs to 339 residues: Retinol dehydrogenase 10-A (339 aa).

Residues 3–23 (IFVEFFLVMLKVCWAIVMAGF) traverse the membrane as a helical; Signal-anchor segment. 40–64 (VITGAGGGLGRLFAKEFARRRATLV) contacts NADP(+). A substrate-binding site is contributed by Ser-195. The active-site Proton acceptor is the Tyr-208.

This sequence belongs to the short-chain dehydrogenases/reductases (SDR) family.

The protein localises to the microsome membrane. It localises to the endoplasmic reticulum membrane. The catalysed reaction is all-trans-retinol + NADP(+) = all-trans-retinal + NADPH + H(+). It functions in the pathway cofactor metabolism; retinol metabolism. In terms of biological role, retinol dehydrogenase with a clear preference for NADP. Converts all-trans-retinol to all-trans-retinal. Has no detectable activity towards 11-cis-retinol, 9-cis-retinol and 13-cis-retinol. This is Retinol dehydrogenase 10-A (rdh10a) from Danio rerio (Zebrafish).